The following is a 78-amino-acid chain: MHEQLPLQDRALEARLIELETRLSFQEQALNELSEALADARLTGARNAELIRHLLEDLGKVRSTLFADAVDEPPPPHY.

This sequence belongs to the SlyX family.

The sequence is that of Protein SlyX homolog from Xanthomonas axonopodis pv. citri (strain 306).